A 492-amino-acid polypeptide reads, in one-letter code: Adenosylhomocysteinase-like 2 (492 aa).

The interval 43–64 is disordered; that stretch reads FTGSSDEEDVSPKDNHQRNSAG. 2 residues coordinate substrate: Asp-192 and Glu-217. 218–220 contacts NAD(+); sequence SVT. The substrate site is built by Lys-247 and Asp-251. Residues 283–288, Glu-304, 360–362, Asn-407, Lys-486, 486–490, and Tyr-490 contribute to the NAD(+) site; these read GDVGKG, MGH, and KANYY.

This sequence belongs to the adenosylhomocysteinase family. Requires NAD(+) as cofactor.

Functionally, might play a role in the regulation of methionine metabolism. This is Adenosylhomocysteinase-like 2 from Drosophila melanogaster (Fruit fly).